We begin with the raw amino-acid sequence, 179 residues long: Acireductone dioxygenase (179 aa).

Fe(2+) is bound by residues His-97, His-99, Glu-103, and His-141. Residues His-97, His-99, Glu-103, and His-141 each coordinate Ni(2+).

This sequence belongs to the acireductone dioxygenase (ARD) family. Monomer. Fe(2+) serves as cofactor. It depends on Ni(2+) as a cofactor.

The catalysed reaction is 1,2-dihydroxy-5-(methylsulfanyl)pent-1-en-3-one + O2 = 3-(methylsulfanyl)propanoate + CO + formate + 2 H(+). The enzyme catalyses 1,2-dihydroxy-5-(methylsulfanyl)pent-1-en-3-one + O2 = 4-methylsulfanyl-2-oxobutanoate + formate + 2 H(+). It participates in amino-acid biosynthesis; L-methionine biosynthesis via salvage pathway; L-methionine from S-methyl-5-thio-alpha-D-ribose 1-phosphate: step 5/6. Its function is as follows. Catalyzes 2 different reactions between oxygen and the acireductone 1,2-dihydroxy-3-keto-5-methylthiopentene (DHK-MTPene) depending upon the metal bound in the active site. Fe-containing acireductone dioxygenase (Fe-ARD) produces formate and 2-keto-4-methylthiobutyrate (KMTB), the alpha-ketoacid precursor of methionine in the methionine recycle pathway. Ni-containing acireductone dioxygenase (Ni-ARD) produces methylthiopropionate, carbon monoxide and formate, and does not lie on the methionine recycle pathway. The sequence is that of Acireductone dioxygenase from Gluconacetobacter diazotrophicus (strain ATCC 49037 / DSM 5601 / CCUG 37298 / CIP 103539 / LMG 7603 / PAl5).